Here is a 126-residue protein sequence, read N- to C-terminus: MATERRVARVAELIKREVSQLLMYEIRDERVGAGMVSVTDVEVSGDLQHAKIFVSIYSTEEVRRSTMAGLKAASGFVRRELGQRIRLRRTPEVVFIEDRSLERGSRVLALLNQIGQQQSTSEVLES.

The protein belongs to the RbfA family. As to quaternary structure, monomer. Binds 30S ribosomal subunits, but not 50S ribosomal subunits or 70S ribosomes.

The protein localises to the cytoplasm. In terms of biological role, one of several proteins that assist in the late maturation steps of the functional core of the 30S ribosomal subunit. Associates with free 30S ribosomal subunits (but not with 30S subunits that are part of 70S ribosomes or polysomes). Required for efficient processing of 16S rRNA. May interact with the 5'-terminal helix region of 16S rRNA. In Thermosynechococcus vestitus (strain NIES-2133 / IAM M-273 / BP-1), this protein is Ribosome-binding factor A.